The sequence spans 404 residues: Chorismate synthase (404 aa).

Positions 40 and 46 each coordinate NADP(+). FMN-binding positions include 135 to 137 (RAS), 256 to 257 (QA), Gly300, 315 to 319 (KPIST), and Arg341.

The protein belongs to the chorismate synthase family. Homotetramer. FMNH2 serves as cofactor.

The enzyme catalyses 5-O-(1-carboxyvinyl)-3-phosphoshikimate = chorismate + phosphate. It participates in metabolic intermediate biosynthesis; chorismate biosynthesis; chorismate from D-erythrose 4-phosphate and phosphoenolpyruvate: step 7/7. Functionally, catalyzes the anti-1,4-elimination of the C-3 phosphate and the C-6 proR hydrogen from 5-enolpyruvylshikimate-3-phosphate (EPSP) to yield chorismate, which is the branch point compound that serves as the starting substrate for the three terminal pathways of aromatic amino acid biosynthesis. This reaction introduces a second double bond into the aromatic ring system. The chain is Chorismate synthase from Mycobacterium sp. (strain JLS).